A 186-amino-acid polypeptide reads, in one-letter code: Zinc finger AN1 domain-containing stress-associated protein 12 (186 aa).

AN1-type zinc fingers lie at residues 10 to 58 (PDLG…HGSR) and 97 to 147 (KKKK…INTA). 16 residues coordinate Zn(2+): Cys-16, Cys-21, Cys-31, Cys-34, Cys-39, His-42, His-48, Cys-50, Cys-103, Cys-108, Cys-120, Cys-123, Cys-128, His-131, His-137, and Cys-139. The tract at residues 167 to 186 (KGCGRGSSVSSKSSPSVRSF) is disordered. Positions 172-186 (GSSVSSKSSPSVRSF) are enriched in low complexity.

May be involved in environmental stress response. The protein is Zinc finger AN1 domain-containing stress-associated protein 12 (SAP12) of Arabidopsis thaliana (Mouse-ear cress).